The chain runs to 325 residues: Lipoyl synthase (325 aa).

7 residues coordinate [4Fe-4S] cluster: Cys68, Cys73, Cys79, Cys94, Cys98, Cys101, and Ser308. In terms of domain architecture, Radical SAM core spans 80 to 297 (FGGGTATFMI…ARVANELGFT (218 aa)).

It belongs to the radical SAM superfamily. Lipoyl synthase family. [4Fe-4S] cluster is required as a cofactor.

The protein resides in the cytoplasm. The enzyme catalyses [[Fe-S] cluster scaffold protein carrying a second [4Fe-4S](2+) cluster] + N(6)-octanoyl-L-lysyl-[protein] + 2 oxidized [2Fe-2S]-[ferredoxin] + 2 S-adenosyl-L-methionine + 4 H(+) = [[Fe-S] cluster scaffold protein] + N(6)-[(R)-dihydrolipoyl]-L-lysyl-[protein] + 4 Fe(3+) + 2 hydrogen sulfide + 2 5'-deoxyadenosine + 2 L-methionine + 2 reduced [2Fe-2S]-[ferredoxin]. Its pathway is protein modification; protein lipoylation via endogenous pathway; protein N(6)-(lipoyl)lysine from octanoyl-[acyl-carrier-protein]: step 2/2. Its function is as follows. Catalyzes the radical-mediated insertion of two sulfur atoms into the C-6 and C-8 positions of the octanoyl moiety bound to the lipoyl domains of lipoate-dependent enzymes, thereby converting the octanoylated domains into lipoylated derivatives. The polypeptide is Lipoyl synthase (Alcanivorax borkumensis (strain ATCC 700651 / DSM 11573 / NCIMB 13689 / SK2)).